Consider the following 483-residue polypeptide: Spore germination protein B1 (483 aa).

The next 5 helical transmembrane spans lie at 289–309, 323–343, 353–373, 375–395, and 410–430; these read ILITIYLPGLYISLVSFHTGL, LNVPFPPFVEAFIMIFTIELI, PIGQTIGLIGGVVIGQAAVQA, IVSALMVIVVSVTALASFTVP, and VMISATALGMYGVIMVYLFVI.

Belongs to the GerABKA family.

It is found in the cell membrane. Functionally, involved in the response to the germinative mixture of L-asparagine, glucose, fructose and potassium ions (AGFK). Cannot stimulate germination in the absence of gerD and gerK gene products (fructose and glucose receptors respectively). This Bacillus subtilis (strain 168) protein is Spore germination protein B1 (gerBA).